The chain runs to 113 residues: B-type lectin plumieribetin (113 aa).

The Bulb-type lectin domain maps to 1 to 109 (NYLSKNDELR…STEIWNSDKN (109 aa)).

In terms of assembly, homotetramer. Interacts with alpha-1-beta-1 integrin (ITGA1/ITGB1). Not glycosylated. Not N-glycosylated and not O-glycosylated with the mostcommon O-linked glycoconjugates. Post-translationally, the N-terminus is blocked. As to expression, expressed by sting venom glands and is also found in skin mucus. Not found in other tissues tested.

Its subcellular location is the secreted. May contribute to some of the local and systemic effects of envenomation by the scorpionfish. Preferentially recognizes mannose-containing carbohydrate structures, but its interaction with single mannose residues is weak. Potently inhibits alpha-1-beta-1 integrin (ITGA1/ITGB1) binding to basement membrane collagen IV in a divalent cation-independent manner. In addition, moderately inhibits both laminin binding integrins alpha-3-beta-1 (ITGA3/ITGB1) and alpha-7-beta-1 (ITGA7/ITGB1). Weakens the cell-collagen contacts, reduces cell spreading, and alters the actin cytoskeleton, after the compensating alpha-2-beta-1 integrin is blocked. On the cellular level, fails to completely detach hepatocarcinoma HepG2 cells and primary arterial smooth muscle cells from the collagen IV fragment CB3. In Scorpaena plumieri (Spotted scorpionfish), this protein is B-type lectin plumieribetin.